Here is a 1299-residue protein sequence, read N- to C-terminus: Protein prickle (1299 aa).

Over residues 1–19 (MSSLSTGGGAGGSSGGPGG) the composition is skewed to gly residues. Disordered stretches follow at residues 1 to 24 (MSSL…DAAA), 115 to 181 (ADDG…EVTQ), 241 to 289 (EEES…PQVP), 368 to 396 (LPRH…PSSS), and 425 to 527 (LPPH…DDDS). The segment covering 145 to 159 (SPRRSKKLLRSLRAH) has biased composition (basic residues). Positions 168–181 (NDTTTANESSEVTQ) are enriched in polar residues. Positions 263–272 (PVPPLPPPPA) are enriched in pro residues. Positions 425 to 434 (LPPHHQQHPG) are enriched in low complexity. The segment covering 435 to 445 (AGMGPGPGSGA) has biased composition (gly residues). Residues 457-469 (PGCSANPKYSNAQ) show a composition bias toward polar residues. Residues 515-623 (MDMQRQSHSD…NVRQLMSARP (109 aa)) enclose the PET domain. Residues 516–525 (DMQRQSHSDD) show a composition bias toward basic and acidic residues. 3 LIM zinc-binding domains span residues 622 to 686 (RPCD…ETLK), 687 to 747 (PRCS…MFAE), and 748 to 810 (YCDY…GEPP). Disordered stretches follow at residues 807 to 865 (GEPP…HQAT), 902 to 940 (KDLE…GDFQ), and 1026 to 1249 (ADIL…SSSS). Positions 844 to 864 (PSSHASSSPPMSPQQQQQHQA) are enriched in low complexity. 2 stretches are compositionally biased toward polar residues: residues 922–934 (RASS…SPLN) and 1070–1081 (SLNTPMSTQSAS). The segment covering 1089 to 1101 (SILSGASSSSPMS) has biased composition (low complexity). A compositionally biased stretch (basic and acidic residues) spans 1136-1150 (GERERDRDKDKEGGG). A compositionally biased stretch (basic residues) spans 1151 to 1183 (RHGHGHSSRRRRRRKSSSSSSHHRSGSGHRSHS). A compositionally biased stretch (basic and acidic residues) spans 1216-1231 (SPSRQQRERERERERE). Residues 1238 to 1249 (VCSTCSSSSSSS) show a composition bias toward low complexity.

Belongs to the prickle / espinas / testin family. As to quaternary structure, interacts with dsh; PET and LIM domains interact with dsh DEP domain, in wing cells. Interacts with Vang in photoreceptor cells. In terms of tissue distribution, expressed in the wing, leg and eye imaginal disks. Expressed within the photoreceptors of the eye.

It is found in the cell membrane. Its function is as follows. Acts in a planar cell polarity (PCP) complex; polarization along the apical/basal axis of epithelial cells. Correct expression of the alternative isoforms is required for PCP signaling in imaginal disks. PCP signaling in the wing disk requires the receptor fz and the cytoplasmic proteins dsh and pk. These act in a feedback loop leading to activation of the jnk cascade and subsequent polarized arrangement of hairs and bristles. Dgo and pk compete with one another for dsh binding, thereby modulating fz dsh activity and ensuring tight control over fz PCP signaling. Vang, stan and pk function together to regulate the establishment of tissue polarity in the adult eye. This Drosophila melanogaster (Fruit fly) protein is Protein prickle.